The primary structure comprises 375 residues: Secreted LysM effector Vd4LysM (375 aa).

The N-terminal stretch at 1-24 (MPSVTISSTMLAGLLLMLVPASSA) is a signal peptide. The 48-residue stretch at 57–104 (SWWWDNEGQIPCANMPAEWGITMQDFLRWNPSITSSCGNFLNGRSYCV) folds into the LysM 1 domain. The tract at residues 108–139 (GEEPPVPGTPTTTTAPATTTKPSNGITTPQPI) is disordered. Residues 116 to 129 (TPTTTTAPATTTKP) are compositionally biased toward low complexity. The region spanning 149–195 (KFHYISEGDRCQDILSYQKITLADFFKWNPAVKSDCSGLWSKTNACV) is the LysM 2 domain. Residues 206-217 (TTTTKPATPTTP) show a composition bias toward low complexity. The interval 206–225 (TTTTKPATPTTPSNGITTPQ) is disordered. The 47-residue stretch at 237 to 283 (KFHYISEGDRCQDILSYQKITQADFFKWNPAVKSDCSGLWSKTHACV) folds into the LysM 3 domain. Positions 287-317 (GGQAPPPTPTTTKPTTTKPPGNGVTTPTPTQ) are disordered. Low complexity predominate over residues 296–317 (TTTKPTTTKPPGNGVTTPTPTQ). One can recognise a LysM 4 domain in the interval 326–372 (KFHFVSPGNTCQQIVSYQKITMANFVKWNSGAGSGCNNLWGNTHACV).

The protein belongs to the secreted LysM effector family.

In terms of biological role, might have a role in sequestration of chitin oligosaccharides (breakdown products of fungal cell walls that are released during invasion and act as triggers of host immunity) to dampen host defense. Does not play an important role during host colonization. The sequence is that of Secreted LysM effector Vd4LysM from Verticillium dahliae (strain VdLs.17 / ATCC MYA-4575 / FGSC 10137) (Verticillium wilt).